The primary structure comprises 695 residues: ATP-dependent DNA helicase II subunit 2 (695 aa).

The Ku domain maps to Phe229 to Asp461.

The protein belongs to the ku80 family. As to quaternary structure, heterodimer of pku70 and pku80.

The protein localises to the nucleus. The protein resides in the chromosome. It is found in the telomere. The enzyme catalyses ATP + H2O = ADP + phosphate + H(+). Its function is as follows. Single-stranded DNA-dependent ATP-dependent helicase. Involved in non-homologous end joining (NHEJ) DNA double strand break repair. DNA-binding is sequence-independent but has a high affinity to nicks in double-stranded DNA and to the ends of duplex DNA. Binds to naturally occurring chromosomal ends, and therefore provides chromosomal end protection. Required also for telomere recombination to repair telomeric ends in the absence of telomerase. ku70, of the ku70/ku80 heterodimer, binds to the stem loop of tlc1, the RNA component of telomerase. Involved in telomere maintenance. Interacts with telomeric repeats and subtelomeric sequences thereby controlling telomere length and protecting against subtelomeric rearrangement. Required for mating-type switching. This Schizosaccharomyces pombe (strain 972 / ATCC 24843) (Fission yeast) protein is ATP-dependent DNA helicase II subunit 2 (pku80).